The sequence spans 131 residues: MKKTGVMNSNISRVIADMGHMDWLGVGDAGTPVPAETEKIDLSVRPGLPSFIDVLEEVLKELEVQKIYIAEEIKTENPKQLEAIKKTLPNVEIEFIPHSELKKDLKTSKAFIRTGEETPYSNVILESGVTF.

Catalysis depends on His-20, which acts as the Proton donor. Substrate contacts are provided by residues Asp-28, His-98, and 120–122; that span reads YSN.

Belongs to the RbsD / FucU family. RbsD subfamily. As to quaternary structure, homodecamer.

Its subcellular location is the cytoplasm. The catalysed reaction is beta-D-ribopyranose = beta-D-ribofuranose. Its pathway is carbohydrate metabolism; D-ribose degradation; D-ribose 5-phosphate from beta-D-ribopyranose: step 1/2. Functionally, catalyzes the interconversion of beta-pyran and beta-furan forms of D-ribose. This Lactobacillus gasseri (strain ATCC 33323 / DSM 20243 / BCRC 14619 / CIP 102991 / JCM 1131 / KCTC 3163 / NCIMB 11718 / NCTC 13722 / AM63) protein is D-ribose pyranase.